The following is an 84-amino-acid chain: MPPHGHHHHGHHGHHEHVTYTTTPIVQPMVQPMPVYGQPPMMVQPQVVMGAPVVYPPTNVVIETSHHHGHHGHHGHHGHHGHFF.

2 stretches are compositionally biased toward basic residues: residues 1–15 and 67–84; these read MPPH…HGHH and HHGH…GHFF. Disordered regions lie at residues 1 to 22 and 64 to 84; these read MPPH…TYTT and TSHH…GHFF.

This is an uncharacterized protein from Dictyostelium discoideum (Social amoeba).